Reading from the N-terminus, the 230-residue chain is Large ribosomal subunit protein uL1 (230 aa).

The protein belongs to the universal ribosomal protein uL1 family. Part of the 50S ribosomal subunit.

Binds directly to 23S rRNA. The L1 stalk is quite mobile in the ribosome, and is involved in E site tRNA release. Its function is as follows. Protein L1 is also a translational repressor protein, it controls the translation of the L11 operon by binding to its mRNA. The polypeptide is Large ribosomal subunit protein uL1 (Metamycoplasma arthritidis (strain 158L3-1) (Mycoplasma arthritidis)).